A 445-amino-acid chain; its full sequence is UPF0210 protein SMU_73 (445 aa).

The protein belongs to the UPF0210 family. Homodimer.

This Streptococcus mutans serotype c (strain ATCC 700610 / UA159) protein is UPF0210 protein SMU_73.